The sequence spans 1283 residues: 5-oxoprolinase PfmaA (1283 aa).

Positions 1256–1283 (NTPGGGAWGKPEGDADGYREEDQAGDGI) are disordered. The segment covering 1266–1277 (PEGDADGYREED) has biased composition (basic and acidic residues).

The protein belongs to the oxoprolinase family. In terms of assembly, homodimer.

The catalysed reaction is 5-oxo-L-proline + ATP + 2 H2O = L-glutamate + ADP + phosphate + H(+). 5-oxoprolinase; part of the gene cluster that mediates the biosynthesis of dihydroxynaphthalene (DHN)-melanin, a bluish-green pigment forming a dark layer in the conidial wall that protects the conidia from UV radiations. The first step of the pathway is the production of the pentaketide 1,3,6,8-tetrahydroxynaphthalene (1,3,6,8-THN or T4HN) by the polyketide synthase PfmaE though condensation of acetyl-CoA with malonyl-CoA. T4HN is not stable and easily oxidizes into the stable form flaviolin. T4HN is also substrate of the hydroxynaphthalene reductase PfmaG to yield scytalone. The scytalone dehydratase PfmaJ then reduces scytalone to 1,3,8-THN. 1,3,8-THN is then substrate of the hydroxynaphthalene reductase PfmaI to yield vermelone. Vermelone is further converted by the multicopper oxidase PfmaD to 1,8-DHN. Finally the laccase PFICI_06862 transforms 1,8-DHN to DHN-melanin. The roles of the 5-oxoprolinase PfmaA and the proline iminopeptidase PfmaB within the cluster have not been elucidated yet. The polypeptide is 5-oxoprolinase PfmaA (Pestalotiopsis fici (strain W106-1 / CGMCC3.15140)).